The primary structure comprises 741 residues: Endoplasmic reticulum membrane sensor NFE2L1 (741 aa).

Residues 7 to 24 (YLTEGLLQFTILLSLIGV) form a helical; Signal-anchor for type II membrane protein membrane-spanning segment. Disordered stretches follow at residues 108-148 (DPEG…TEQG) and 198-220 (QKEQ…WSGE). Residues 113–131 (VSGSQPNSGLALESSSGLQ) show a composition bias toward polar residues. The interval 191–199 (VFDYSHRQK) is cholesterol recognition/amino acid consensus (CRAC) region. The segment covering 198-216 (QKEQDVDKELQDGREREDT) has biased composition (basic and acidic residues). Asn-319 and Asn-331 each carry an N-linked (GlcNAc...) asparagine glycan. The interval 350-354 (SPEVE) is CPD. The N-linked (GlcNAc...) asparagine glycan is linked to Asn-394. Disordered stretches follow at residues 441 to 501 (EEEF…DSET) and 551 to 582 (SALD…QMSR). Positions 447 to 451 (DSGLS) match the Destruction motif motif. Low complexity predominate over residues 447-492 (DSGLSLDSSHSPSSLSSSEGSSSSSSSSSSSSASSSASSSFSEEGA). Phosphoserine; by CK2 is present on Ser-497. Positions 567-582 (GSKEKQADFLDKQMSR) are enriched in basic and acidic residues. Residue Ser-568 is modified to Phosphoserine. The bZIP domain maps to 623–686 (LIRDIRRRGK…RQMKQKVQSL (64 aa)). The interval 625–644 (RDIRRRGKNKMAAQNCRKRK) is basic motif. The tract at residues 651–665 (LERDVEDLQRDKARL) is leucine-zipper. The disordered stretch occupies residues 722–741 (RTMADQQARRQERKPKDRRK). A Nuclear localization signal motif is present at residues 730–737 (RRQERKPK). Basic residues predominate over residues 732–741 (QERKPKDRRK).

Belongs to the bZIP family. CNC subfamily. Interacts with KEAP1. As to quaternary structure, interacts (via CPD region) with FBXW7; leading to its ubiquitination and degradation. Interacts with SYVN1/HRD1; leading to its ubiquitination and degradation. Interacts (when ubiquitinated) with DDI2; leading to its cleavage. In terms of assembly, interacts (via the bZIP domain) with small MAF protein (MAFF, MAFG or MAFK); required for binding to antioxidant response elements (AREs) on DNA. Interacts (via Destruction motif) with BTRC; leading to its ubiquitination and degradation. Interacts with CEBPB; the heterodimer represses expression of DSPP during odontoblast differentiation. Interacts with MOTS-c, a peptide produced by the mitochondrially encoded 12S rRNA MT-RNR1. In terms of processing, cleaved at Leu-104 by the aspartyl protease DDI2 following retrotranslocation, releasing the protein from the endoplasmic reticulum membrane and forming the transcription factor NRF1 that translocates into the nucleus. Ubiquitination is prerequisite for cleavage by aspartyl protease DDI2. N-glycosylated in normal conditions, when it has a single-pass type II membrane protein topology, with the DNA-binding domain facing the endoplasmic reticulum lumen. Deglycosylated during retrotranslocation to the cytosolic side of the membrane, to have a single-pass type III membrane protein topology with the major part of the protein facing the cytosol. Post-translationally, ubiquitinated by the SCF(FBXW7) complex and SYVN1/HRD1, leading to its degradation by the proteasome. Ubiquitinated during retrotranslocation to the cytosolic side of the membrane: ubiquitination does not lead to degradation and is required for processing by the aspartyl protease DDI2 and subsequent release from the endoplasmic reticulum membrane. In terms of processing, phosphorylation by CK2 at Ser-497 inhibits transcription factor activity, possibly by affecting DNA-binding activity. Phosphorylation at Ser-568 is required for interaction with CEBPB. Ubiquitinated by the SCF(BTRC) complex in the nucleus, leading to its degradation by the proteasome. As to expression, isoform 1: Widely expressed including kidney, brown fat, white fat, large intestine, small intestine, stomach, lung, brain and liver. Isoform 1: Expressed in mouse embryonic fibroblasts (MEF). Isoform 2: Widely expressed including kidney, brown fat, white fat, large intestine, small intestine, stomach, lung, brain and liver. Isoform 2: levels in white fat, lung and liver are increased compared to isoform 1 (at protein level). Isoform 2: levels are elevated in brown fat and brain, but are reduced in liver compared to isoform 1 levels. Isoform 2: Expressed in mouse embryonic fibroblasts (MEF).

The protein resides in the endoplasmic reticulum membrane. It is found in the nucleus. Its subcellular location is the cytoplasm. Its function is as follows. Endoplasmic reticulum membrane sensor that translocates into the nucleus in response to various stresses to act as a transcription factor. Constitutes a precursor of the transcription factor NRF1. Able to detect various cellular stresses, such as cholesterol excess, oxidative stress or proteasome inhibition. In response to stress, it is released from the endoplasmic reticulum membrane following cleavage by the protease DDI2 and translocates into the nucleus to form the transcription factor NRF1. Acts as a key sensor of cholesterol excess: in excess cholesterol conditions, the endoplasmic reticulum membrane form of the protein directly binds cholesterol via its CRAC motif, preventing cleavage and release of the transcription factor NRF1, thereby allowing expression of genes promoting cholesterol removal, such as CD36. Involved in proteasome homeostasis: in response to proteasome inhibition, it is released from the endoplasmic reticulum membrane, translocates to the nucleus and activates expression of genes encoding proteasome subunits. CNC-type bZIP family transcription factor that translocates to the nucleus and regulates expression of target genes in response to various stresses. Heterodimerizes with small-Maf proteins (MAFF, MAFG or MAFK) and binds DNA motifs including the antioxidant response elements (AREs), which regulate expression of genes involved in oxidative stress response. Activates or represses expression of target genes, depending on the context. Plays a key role in cholesterol homeostasis by acting as a sensor of cholesterol excess: in low cholesterol conditions, translocates into the nucleus and represses expression of genes involved in defense against cholesterol excess, such as CD36. In excess cholesterol conditions, the endoplasmic reticulum membrane form of the protein directly binds cholesterol via its CRAC motif, preventing cleavage and release of the transcription factor NRF1, thereby allowing expression of genes promoting cholesterol removal. Critical for redox balance in response to oxidative stress: acts by binding the AREs motifs on promoters and mediating activation of oxidative stress response genes, such as GCLC, GCLM, GSS, MT1 and MT2. Plays an essential role during fetal liver hematopoiesis: probably has a protective function against oxidative stress and is involved in lipid homeostasis in the liver. Involved in proteasome homeostasis: in response to proteasome inhibition, mediates the 'bounce-back' of proteasome subunits by translocating into the nucleus and activating expression of genes encoding proteasome subunits. Also involved in regulating glucose flux. Together with CEBPB; represses expression of DSPP during odontoblast differentiation. In response to ascorbic acid induction, activates expression of SP7/Osterix in osteoblasts. Functionally, transcription factor that binds the antioxidant response elements (ARE) consensus sequence on promoters and activates their expression. In terms of biological role, transcription factor that binds the extended kappa 3 site of the TNF-alpha promoter after Fc gamma RIII stimulation and participates in the induction of this cytokine. The polypeptide is Endoplasmic reticulum membrane sensor NFE2L1 (Mus musculus (Mouse)).